We begin with the raw amino-acid sequence, 561 residues long: uncharacterized protein (561 aa).

Residues 187-217 (DDEELSEEEILNRIDKLQIELEQVIGKQKNI) adopt a coiled-coil conformation.

This is an uncharacterized protein from Dictyostelium discoideum (Social amoeba).